We begin with the raw amino-acid sequence, 73 residues long: Translation initiation factor IF-1 (73 aa).

The region spanning 1 to 73 is the S1-like domain; the sequence is MAKKEDTIVL…TKARVVYRHR (73 aa).

The protein belongs to the IF-1 family. Component of the 30S ribosomal translation pre-initiation complex which assembles on the 30S ribosome in the order IF-2 and IF-3, IF-1 and N-formylmethionyl-tRNA(fMet); mRNA recruitment can occur at any time during PIC assembly.

The protein resides in the cytoplasm. One of the essential components for the initiation of protein synthesis. Stabilizes the binding of IF-2 and IF-3 on the 30S subunit to which N-formylmethionyl-tRNA(fMet) subsequently binds. Helps modulate mRNA selection, yielding the 30S pre-initiation complex (PIC). Upon addition of the 50S ribosomal subunit IF-1, IF-2 and IF-3 are released leaving the mature 70S translation initiation complex. The sequence is that of Translation initiation factor IF-1 from Chlamydia muridarum (strain MoPn / Nigg).